The following is a 422-amino-acid chain: Serine hydroxymethyltransferase (422 aa).

Residues Leu-119 and 123-125 each bind (6S)-5,6,7,8-tetrahydrofolate; that span reads GHL. At Lys-228 the chain carries N6-(pyridoxal phosphate)lysine. (6S)-5,6,7,8-tetrahydrofolate contacts are provided by residues Glu-244 and 352 to 354; that span reads SPF.

Belongs to the SHMT family. In terms of assembly, homodimer. Requires pyridoxal 5'-phosphate as cofactor.

It localises to the cytoplasm. It catalyses the reaction (6R)-5,10-methylene-5,6,7,8-tetrahydrofolate + glycine + H2O = (6S)-5,6,7,8-tetrahydrofolate + L-serine. Its pathway is one-carbon metabolism; tetrahydrofolate interconversion. The protein operates within amino-acid biosynthesis; glycine biosynthesis; glycine from L-serine: step 1/1. Catalyzes the reversible interconversion of serine and glycine with tetrahydrofolate (THF) serving as the one-carbon carrier. This reaction serves as the major source of one-carbon groups required for the biosynthesis of purines, thymidylate, methionine, and other important biomolecules. Also exhibits THF-independent aldolase activity toward beta-hydroxyamino acids, producing glycine and aldehydes, via a retro-aldol mechanism. In Magnetococcus marinus (strain ATCC BAA-1437 / JCM 17883 / MC-1), this protein is Serine hydroxymethyltransferase.